Reading from the N-terminus, the 690-residue chain is Elongation factor G (690 aa).

The 276-residue stretch at E8–L283 folds into the tr-type G domain. Residues A17–T24, D81–H85, and N135–D138 each bind GTP.

The protein belongs to the TRAFAC class translation factor GTPase superfamily. Classic translation factor GTPase family. EF-G/EF-2 subfamily.

Its subcellular location is the cytoplasm. Its function is as follows. Catalyzes the GTP-dependent ribosomal translocation step during translation elongation. During this step, the ribosome changes from the pre-translocational (PRE) to the post-translocational (POST) state as the newly formed A-site-bound peptidyl-tRNA and P-site-bound deacylated tRNA move to the P and E sites, respectively. Catalyzes the coordinated movement of the two tRNA molecules, the mRNA and conformational changes in the ribosome. In Rhizorhabdus wittichii (strain DSM 6014 / CCUG 31198 / JCM 15750 / NBRC 105917 / EY 4224 / RW1) (Sphingomonas wittichii), this protein is Elongation factor G.